Reading from the N-terminus, the 540-residue chain is Protein PALS2 (540 aa).

2 consecutive L27 domains span residues 1 to 48 (MQQV…EDSK) and 49 to 107 (LEAV…YDSP). Residues 130-209 (ILGIHKRAGE…SVTLKILPSY (80 aa)) enclose the PDZ domain. The region spanning 215 to 284 (PQQVFVKCHF…PSQFLEEKRK (70 aa)) is the SH3 domain. Positions 338–525 (RKTLVLIGAQ…AFEKLQTAIE (188 aa)) constitute a Guanylate kinase-like domain. A Phosphotyrosine modification is found at Tyr500.

This sequence belongs to the MAGUK family. Interacts with CADM1. Interacts with the LIN7 proteins. In terms of tissue distribution, abundant in testis, brain, and kidney with lower levels detectable in other tissues.

Its subcellular location is the membrane. The sequence is that of Protein PALS2 from Homo sapiens (Human).